Reading from the N-terminus, the 301-residue chain is Bifunctional protein FolD (301 aa).

Residues 164 to 166, serine 191, and isoleucine 232 contribute to the NADP(+) site; that span reads GRS.

Belongs to the tetrahydrofolate dehydrogenase/cyclohydrolase family. As to quaternary structure, homodimer.

The enzyme catalyses (6R)-5,10-methylene-5,6,7,8-tetrahydrofolate + NADP(+) = (6R)-5,10-methenyltetrahydrofolate + NADPH. It catalyses the reaction (6R)-5,10-methenyltetrahydrofolate + H2O = (6R)-10-formyltetrahydrofolate + H(+). It functions in the pathway one-carbon metabolism; tetrahydrofolate interconversion. Catalyzes the oxidation of 5,10-methylenetetrahydrofolate to 5,10-methenyltetrahydrofolate and then the hydrolysis of 5,10-methenyltetrahydrofolate to 10-formyltetrahydrofolate. This Borrelia garinii subsp. bavariensis (strain ATCC BAA-2496 / DSM 23469 / PBi) (Borreliella bavariensis) protein is Bifunctional protein FolD.